Here is a 299-residue protein sequence, read N- to C-terminus: Inosose dehydratase (299 aa).

It belongs to the IolE/MocC family. The cofactor is glutathione. Co(2+) serves as cofactor. Requires Mn(2+) as cofactor.

The catalysed reaction is scyllo-inosose = 3D-3,5/4-trihydroxycyclohexane-1,2-dione + H2O. In terms of biological role, catalyzes the dehydration of inosose (2-keto-myo-inositol, 2KMI or 2,4,6/3,5-pentahydroxycyclohexanone) to 3D-(3,5/4)-trihydroxycyclohexane-1,2-dione (D-2,3-diketo-4-deoxy-epi-inositol). This Klebsiella pneumoniae (strain 342) protein is Inosose dehydratase.